The primary structure comprises 308 residues: N-acetylmuramic acid 6-phosphate etherase (308 aa).

One can recognise an SIS domain in the interval 59 to 222 (TAERLRHGGR…STGVMVKLGK (164 aa)). The Proton donor role is filled by E87. Residue E118 is part of the active site.

It belongs to the GCKR-like family. MurNAc-6-P etherase subfamily. Homodimer.

The catalysed reaction is N-acetyl-D-muramate 6-phosphate + H2O = N-acetyl-D-glucosamine 6-phosphate + (R)-lactate. It functions in the pathway amino-sugar metabolism; N-acetylmuramate degradation. Specifically catalyzes the cleavage of the D-lactyl ether substituent of MurNAc 6-phosphate, producing GlcNAc 6-phosphate and D-lactate. This is N-acetylmuramic acid 6-phosphate etherase from Nostoc punctiforme (strain ATCC 29133 / PCC 73102).